Consider the following 376-residue polypeptide: Thymidine kinase (376 aa).

The interval 1-39 (MASYPCHQHASAFDQAARSRGHSNRRTALRPRRQQEATE) is disordered. A compositionally biased stretch (basic residues) spans 19 to 32 (SRGHSNRRTALRPR). 56–63 (GPHGMGKT) provides a ligand contact to ATP. E83 serves as the catalytic Proton acceptor. Substrate-binding residues include Y101 and Q125. An ATP-binding site is contributed by R216. R222 lines the substrate pocket.

The protein belongs to the herpesviridae thymidine kinase family. Homodimer.

The catalysed reaction is thymidine + ATP = dTMP + ADP + H(+). Catalyzes the transfer of the gamma-phospho group of ATP to thymidine to generate dTMP in the salvage pathway of pyrimidine synthesis. The dTMP serves as a substrate for DNA polymerase during viral DNA replication. Allows the virus to be reactivated and to grow in non-proliferative cells lacking a high concentration of phosphorylated nucleic acid precursors. This is Thymidine kinase from Human herpesvirus 1 (strain CL101) (HHV-1).